A 339-amino-acid chain; its full sequence is Zinc transporter 3 (339 aa).

The signal sequence occupies residues 1–25 (MKTKNVKLLFFFFSVSLLLIAVVNA). At 26–54 (AEGHSHGGPKCECSHEDDHENKAGARKYK) the chain is on the extracellular side. Residues 55–75 (IAAIPTVLIAGIIGVLFPLLG) traverse the membrane as a helical segment. Topologically, residues 76 to 86 (KVFPSLRPETC) are cytoplasmic. Residues 87–107 (FFFVTKAFAAGVILATGFMHV) traverse the membrane as a helical segment. Residues 108–123 (LPEAYEMLNSPCLTSE) lie on the Extracellular side of the membrane. Residues 124 to 144 (AWEFPFTGFIAMIAAILTLSV) traverse the membrane as a helical segment. Over 145–184 (DTFATSSFYKSHCKASKRVSDGETGESSVDSEKVQILRTR) the chain is Cytoplasmic. A helical membrane pass occupies residues 185–205 (VIAQVLELGIIVHSVVIGISL). Over 206–216 (GASQSPDAAKA) the chain is Extracellular. Residues 217-237 (LFIALMFHQCFEGLGLGGCIA) traverse the membrane as a helical segment. Residues 238 to 247 (QGKFKCLSVT) lie on the Cytoplasmic side of the membrane. The helical transmembrane segment at 248–268 (IMSTFFAITTPIGIVVGMGIA) threads the bilayer. At 269–278 (NSYDESSPTA) the chain is on the extracellular side. A helical transmembrane segment spans residues 279-299 (LIVQGVLNAASAGILIYMSLV). Residues 300–315 (DLLAADFTHPKMQSNT) are Cytoplasmic-facing. A helical transmembrane segment spans residues 316 to 336 (GLQIMAHIALLLGAGLMSLLA). Residues 337–339 (KWA) lie on the Extracellular side of the membrane.

The protein belongs to the ZIP transporter (TC 2.A.5) family. In terms of tissue distribution, expressed predominantly in the roots of zinc-deficient plants.

Its subcellular location is the cell membrane. Functionally, mediates zinc uptake from the rhizosphere. May also transport other divalent cations. The polypeptide is Zinc transporter 3 (ZIP3) (Arabidopsis thaliana (Mouse-ear cress)).